A 532-amino-acid chain; its full sequence is Glucose-6-phosphate isomerase (532 aa).

Catalysis depends on glutamate 322, which acts as the Proton donor. Catalysis depends on residues histidine 351 and lysine 457.

This sequence belongs to the GPI family.

The protein localises to the cytoplasm. It carries out the reaction alpha-D-glucose 6-phosphate = beta-D-fructose 6-phosphate. The protein operates within carbohydrate biosynthesis; gluconeogenesis. It participates in carbohydrate degradation; glycolysis; D-glyceraldehyde 3-phosphate and glycerone phosphate from D-glucose: step 2/4. Its function is as follows. Catalyzes the reversible isomerization of glucose-6-phosphate to fructose-6-phosphate. The protein is Glucose-6-phosphate isomerase of Synechococcus sp. (strain JA-2-3B'a(2-13)) (Cyanobacteria bacterium Yellowstone B-Prime).